The sequence spans 955 residues: Leucine--tRNA ligase (955 aa).

A 'HIGH' region motif is present at residues 51–61 (PYLNGVLHAGH). The 'KMSKS' region motif lies at 647-651 (KLSKS). Residue Lys650 participates in ATP binding.

It belongs to the class-I aminoacyl-tRNA synthetase family.

It is found in the cytoplasm. The catalysed reaction is tRNA(Leu) + L-leucine + ATP = L-leucyl-tRNA(Leu) + AMP + diphosphate. The protein is Leucine--tRNA ligase of Methanococcus maripaludis (strain DSM 14266 / JCM 13030 / NBRC 101832 / S2 / LL).